Reading from the N-terminus, the 371-residue chain is MVNEKRLLEEFLELVQIDSETKHEAEICKVLKRKFSDLGVDVKEDDTMDITGHGAGNLICTLKGTKQTDTIYFTSHMDTVVPGNGVKPVVENGYVKTDGTTILGADDKAGLAAMFEAIKVLKEENIEHGTIEFIITVGEESGLIGAKALDRSMITASYGYALDSDGKVGNIIVAAPTQAKVRAAIFGKTAHAGVEPEKGISAITIASKAISKMPLGRIDEETTANIGRFEGGTQTNIVCDEVHILAEARSLVPEKMEAQVQKMKAAFEEAAADMGGRAEVEIEVMYPGFKYQDGDQVVEIAKKAAAKIGRPSELQTSGGGSDANVIAGHGIPTVNLAVGYEQIHTKNEKMPIEELVKTAEMVVAIIEEAAK.

H76 provides a ligand contact to Zn(2+). Residue D78 is part of the active site. D106 is a binding site for Zn(2+). The Proton acceptor role is filled by E139. Zn(2+) is bound by residues E140, D163, and H344.

The protein belongs to the peptidase M20A family. The cofactor is Zn(2+).

Functionally, could be a peptidase. This is an uncharacterized protein from Bacillus subtilis (strain 168).